The sequence spans 325 residues: Tetraacyldisaccharide 4'-kinase (325 aa).

Position 58–65 (58–65) interacts with ATP; sequence TVGGSGKT.

This sequence belongs to the LpxK family.

The catalysed reaction is a lipid A disaccharide + ATP = a lipid IVA + ADP + H(+). It participates in glycolipid biosynthesis; lipid IV(A) biosynthesis; lipid IV(A) from (3R)-3-hydroxytetradecanoyl-[acyl-carrier-protein] and UDP-N-acetyl-alpha-D-glucosamine: step 6/6. In terms of biological role, transfers the gamma-phosphate of ATP to the 4'-position of a tetraacyldisaccharide 1-phosphate intermediate (termed DS-1-P) to form tetraacyldisaccharide 1,4'-bis-phosphate (lipid IVA). The sequence is that of Tetraacyldisaccharide 4'-kinase from Coxiella burnetii (strain RSA 331 / Henzerling II).